The following is a 170-amino-acid chain: Adenine phosphoribosyltransferase (170 aa).

Belongs to the purine/pyrimidine phosphoribosyltransferase family. As to quaternary structure, homodimer.

The protein localises to the cytoplasm. The enzyme catalyses AMP + diphosphate = 5-phospho-alpha-D-ribose 1-diphosphate + adenine. It participates in purine metabolism; AMP biosynthesis via salvage pathway; AMP from adenine: step 1/1. Functionally, catalyzes a salvage reaction resulting in the formation of AMP, that is energically less costly than de novo synthesis. The protein is Adenine phosphoribosyltransferase of Thermotoga neapolitana (strain ATCC 49049 / DSM 4359 / NBRC 107923 / NS-E).